A 395-amino-acid polypeptide reads, in one-letter code: GA-binding protein subunit beta-1 (395 aa).

An N-acetylserine modification is found at S2. ANK repeat units follow at residues 5-34 (DLGKKLLEAARAGQDDEVRILMANGAPFTT) and 37-66 (LGTSPLHLAAQYGHYSTTEVLLRAGVSRDA). N6-acetyllysine is present on K69. ANK repeat units follow at residues 70 to 99 (VDRTPLHMAASEGHASIVEVLLKHGADVNA), 103 to 132 (LKMTALHWATEHNHQEVVELLIKYGADVHT), and 136 to 166 (FCKTAFDISIDNGNEDLAEILQIAMQNQINT). The tract at residues 258-327 (DGAIQQVVSS…ETVISEEPPA (70 aa)) is transcription activation and HCFC1 interaction. N6-acetyllysine is present on residues K352 and K381.

In terms of assembly, heterotetramer of two alpha and two beta subunits. Interacts with HCFC1, causing repression of transcriptional activity. In terms of processing, acetylated by EP300/p300. Deacetylated by SIRT7, promoting heterotetramerization and activity.

It localises to the nucleus. Its function is as follows. Transcription factor capable of interacting with purine rich repeats (GA repeats). Acts as a master regulator of nuclear-encoded mitochondrial genes. (Microbial infection) Necessary for the expression of the Adenovirus E4 gene. This Homo sapiens (Human) protein is GA-binding protein subunit beta-1 (GABPB1).